The sequence spans 293 residues: 4-hydroxybenzoate octaprenyltransferase (293 aa).

Transmembrane regions (helical) follow at residues 26–46 (IGTL…AKGM), 49–69 (IKVL…GCII), 102–122 (LFAL…PLVV), 148–168 (FLGI…LGEV), 173–193 (WWLF…YAMI), 217–237 (WIAV…LSAE), 240–260 (FIYA…QRLI), and 272–292 (FLNN…DYLL).

Belongs to the UbiA prenyltransferase family. Mg(2+) serves as cofactor.

The protein resides in the cell inner membrane. It carries out the reaction all-trans-octaprenyl diphosphate + 4-hydroxybenzoate = 4-hydroxy-3-(all-trans-octaprenyl)benzoate + diphosphate. It functions in the pathway cofactor biosynthesis; ubiquinone biosynthesis. In terms of biological role, catalyzes the prenylation of para-hydroxybenzoate (PHB) with an all-trans polyprenyl group. Mediates the second step in the final reaction sequence of ubiquinone-8 (UQ-8) biosynthesis, which is the condensation of the polyisoprenoid side chain with PHB, generating the first membrane-bound Q intermediate 3-octaprenyl-4-hydroxybenzoate. This chain is 4-hydroxybenzoate octaprenyltransferase, found in Shewanella denitrificans (strain OS217 / ATCC BAA-1090 / DSM 15013).